Here is a 174-residue protein sequence, read N- to C-terminus: Peroxisome assembly protein 22 (174 aa).

A helical transmembrane segment spans residues 9–27; it reads GYLAIIAAVSIGAAAYLWW.

The protein belongs to the peroxin-22 family.

It localises to the peroxisome membrane. Its function is as follows. Involved in peroxisome biogenesis. This Candida glabrata (strain ATCC 2001 / BCRC 20586 / JCM 3761 / NBRC 0622 / NRRL Y-65 / CBS 138) (Yeast) protein is Peroxisome assembly protein 22 (PEX22).